The sequence spans 376 residues: ATP phosphoribosyltransferase regulatory subunit (376 aa).

Belongs to the class-II aminoacyl-tRNA synthetase family. HisZ subfamily. As to quaternary structure, heteromultimer composed of HisG and HisZ subunits.

It is found in the cytoplasm. It participates in amino-acid biosynthesis; L-histidine biosynthesis; L-histidine from 5-phospho-alpha-D-ribose 1-diphosphate: step 1/9. Required for the first step of histidine biosynthesis. May allow the feedback regulation of ATP phosphoribosyltransferase activity by histidine. This is ATP phosphoribosyltransferase regulatory subunit from Brucella anthropi (strain ATCC 49188 / DSM 6882 / CCUG 24695 / JCM 21032 / LMG 3331 / NBRC 15819 / NCTC 12168 / Alc 37) (Ochrobactrum anthropi).